A 717-amino-acid polypeptide reads, in one-letter code: uncharacterized protein (717 aa).

The protein belongs to the asfivirus C717R family.

It localises to the virion. This is an uncharacterized protein from Ornithodoros (relapsing fever ticks).